The primary structure comprises 275 residues: UPF0758 protein RL2068 (275 aa).

The segment at 1–45 (MAKGPVSTSSDDELPFETQEPIAADERSFFGGQPQKPSAPNARAA) is disordered. One can recognise an MPN domain in the interval 153 to 275 (VLSSWSSVIQ…HVSLKGLKLI (123 aa)). H224, H226, and D237 together coordinate Zn(2+). The short motif at 224–237 (HNHPSGDPTPSRAD) is the JAMM motif element.

Belongs to the UPF0758 family.

This chain is UPF0758 protein RL2068, found in Rhizobium johnstonii (strain DSM 114642 / LMG 32736 / 3841) (Rhizobium leguminosarum bv. viciae).